A 190-amino-acid polypeptide reads, in one-letter code: MRIAILGGTYNPVHVGHMFLAKEIEHFLNVDKILFIPTHKPVHKCVENISVKDRIAMLKLAVQHENNMFIDECDIINGGITYTVDTIACIRNKYVHDDIYLVIGDDLFESFDSWKNPEKIIDSVNLVVVHRIYSERLVSRFKHTYIDNRIFSISSSEIRSRIEQGLPVDYLLPFDVLQYIKSNNLYVKGK.

It belongs to the NadD family.

The enzyme catalyses nicotinate beta-D-ribonucleotide + ATP + H(+) = deamido-NAD(+) + diphosphate. It participates in cofactor biosynthesis; NAD(+) biosynthesis; deamido-NAD(+) from nicotinate D-ribonucleotide: step 1/1. Its function is as follows. Catalyzes the reversible adenylation of nicotinate mononucleotide (NaMN) to nicotinic acid adenine dinucleotide (NaAD). In Borrelia turicatae (strain 91E135), this protein is Probable nicotinate-nucleotide adenylyltransferase.